Here is a 481-residue protein sequence, read N- to C-terminus: Cysteine--tRNA ligase (481 aa).

Position 43 (C43) interacts with Zn(2+). The 'HIGH' region signature appears at 45-55 (ATVQGLPHIGH). The Zn(2+) site is built by C221, H246, and E250. The 'KMSKS' region motif lies at 277 to 281 (KMSKS). K280 provides a ligand contact to ATP.

It belongs to the class-I aminoacyl-tRNA synthetase family. In terms of assembly, monomer. The cofactor is Zn(2+).

The protein localises to the cytoplasm. It carries out the reaction tRNA(Cys) + L-cysteine + ATP = L-cysteinyl-tRNA(Cys) + AMP + diphosphate. This chain is Cysteine--tRNA ligase, found in Mycobacterium sp. (strain KMS).